The sequence spans 194 residues: FMN-dependent NADH:quinone oxidoreductase (194 aa).

FMN-binding positions include serine 10 and 90 to 93 (MYNL).

It belongs to the azoreductase type 1 family. As to quaternary structure, homodimer. FMN is required as a cofactor.

The enzyme catalyses 2 a quinone + NADH + H(+) = 2 a 1,4-benzosemiquinone + NAD(+). It carries out the reaction N,N-dimethyl-1,4-phenylenediamine + anthranilate + 2 NAD(+) = 2-(4-dimethylaminophenyl)diazenylbenzoate + 2 NADH + 2 H(+). Quinone reductase that provides resistance to thiol-specific stress caused by electrophilic quinones. Its function is as follows. Also exhibits azoreductase activity. Catalyzes the reductive cleavage of the azo bond in aromatic azo compounds to the corresponding amines. The protein is FMN-dependent NADH:quinone oxidoreductase of Haemophilus influenzae (strain ATCC 51907 / DSM 11121 / KW20 / Rd).